Consider the following 198-residue polypeptide: V-type ATP synthase subunit E (198 aa).

The protein belongs to the V-ATPase E subunit family.

In terms of biological role, produces ATP from ADP in the presence of a proton gradient across the membrane. This chain is V-type ATP synthase subunit E, found in Clostridium perfringens (strain SM101 / Type A).